The primary structure comprises 208 residues: Imidazoleglycerol-phosphate dehydratase (208 aa).

The protein belongs to the imidazoleglycerol-phosphate dehydratase family.

Its subcellular location is the cytoplasm. It catalyses the reaction D-erythro-1-(imidazol-4-yl)glycerol 3-phosphate = 3-(imidazol-4-yl)-2-oxopropyl phosphate + H2O. Its pathway is amino-acid biosynthesis; L-histidine biosynthesis; L-histidine from 5-phospho-alpha-D-ribose 1-diphosphate: step 6/9. In Anaeromyxobacter dehalogenans (strain 2CP-1 / ATCC BAA-258), this protein is Imidazoleglycerol-phosphate dehydratase.